We begin with the raw amino-acid sequence, 34 residues long: uncharacterized protein (34 aa).

A helical membrane pass occupies residues 10-30; the sequence is LIITSSFFAIAAVLVLSVLLI.

It localises to the membrane. This is an uncharacterized protein from Escherichia coli O6:H1 (strain CFT073 / ATCC 700928 / UPEC).